Here is a 139-residue protein sequence, read N- to C-terminus: D-ribose pyranase (139 aa).

His20 acts as the Proton donor in catalysis. Substrate-binding positions include Asp28, His106, and 128 to 130; that span reads YAN.

It belongs to the RbsD / FucU family. RbsD subfamily. As to quaternary structure, homodecamer.

The protein localises to the cytoplasm. The enzyme catalyses beta-D-ribopyranose = beta-D-ribofuranose. The protein operates within carbohydrate metabolism; D-ribose degradation; D-ribose 5-phosphate from beta-D-ribopyranose: step 1/2. Catalyzes the interconversion of beta-pyran and beta-furan forms of D-ribose. In Citrobacter koseri (strain ATCC BAA-895 / CDC 4225-83 / SGSC4696), this protein is D-ribose pyranase.